The chain runs to 223 residues: DNA mismatch repair protein MutH (223 aa).

It belongs to the MutH family.

It is found in the cytoplasm. Functionally, sequence-specific endonuclease that cleaves unmethylated GATC sequences. It is involved in DNA mismatch repair. The chain is DNA mismatch repair protein MutH from Shewanella baltica (strain OS223).